A 306-amino-acid polypeptide reads, in one-letter code: Probable C-terminal domain small phosphatase (306 aa).

Over residues 1–36 (MNSSPITQVSNPNDSLNHSSTNLIPSSHNSLNNYPQ) the composition is skewed to polar residues. 2 disordered regions span residues 1–45 (MNSS…NRKK) and 61–116 (NDQN…NKDS). Over residues 61-111 (NDQNNGNNINTDNGASNNDKLQQQKQYNQQQQQQYNQHQQQQQQQQQQQQY) the composition is skewed to low complexity. The FCP1 homology domain occupies 132 to 290 (RHVGLKTLVL…LDLLPLLDDL (159 aa)). Aspartate 142 functions as the 4-aspartylphosphate intermediate in the catalytic mechanism. 3 residues coordinate Mg(2+): aspartate 142, aspartate 144, and asparagine 253. Aspartate 144 acts as the Proton donor in catalysis.

In terms of assembly, monomer. Mg(2+) is required as a cofactor.

It localises to the nucleus. The enzyme catalyses O-phospho-L-seryl-[protein] + H2O = L-seryl-[protein] + phosphate. It carries out the reaction O-phospho-L-threonyl-[protein] + H2O = L-threonyl-[protein] + phosphate. May function as a phosphatase involved in the regulation of cell growth and differentiation. In Dictyostelium discoideum (Social amoeba), this protein is Probable C-terminal domain small phosphatase (fcpA).